Reading from the N-terminus, the 231-residue chain is Orotidine 5'-phosphate decarboxylase (231 aa).

Residues D11, K33, 60-69 (DLKFHDIPNT), T117, R178, Q187, G207, and R208 each bind substrate. Catalysis depends on K62, which acts as the Proton donor.

Belongs to the OMP decarboxylase family. Type 1 subfamily. As to quaternary structure, homodimer.

The enzyme catalyses orotidine 5'-phosphate + H(+) = UMP + CO2. The protein operates within pyrimidine metabolism; UMP biosynthesis via de novo pathway; UMP from orotate: step 2/2. Catalyzes the decarboxylation of orotidine 5'-monophosphate (OMP) to uridine 5'-monophosphate (UMP). The protein is Orotidine 5'-phosphate decarboxylase of Nitrosomonas eutropha (strain DSM 101675 / C91 / Nm57).